A 342-amino-acid chain; its full sequence is Delta(6)-protoilludene synthase (342 aa).

Residues D81, N217, S221, and E225 each coordinate Mg(2+). A DDXXD motif motif is present at residues 81-85 (DEYSD). Positions 306 and 307 each coordinate (2E,6E)-farnesyl diphosphate.

The protein belongs to the terpene synthase family. The cofactor is Mg(2+).

It carries out the reaction (2E,6E)-farnesyl diphosphate = Delta(6)-protoilludene + diphosphate. Its function is as follows. Delta(6)-protoilludene synthase, part of the gene cluster that mediates the biosynthesis of melleolides, a range of antifungal and phytotoxic polyketide derivatives composed of an orsellinic acid (OA) moiety esterified to various sesquiterpene alcohols. The first step in melleolides biosynthesis is performed by the delta(6)-protoilludene synthase PRO1 which catalyzes the cyclization of farnesyl diphosphate to protoilludene. The orsellinic acid synthase armB produces OA by condensing acetyl-CoA with 3 malonyl-CoA units in a three-round chain elongation reaction folowed by a C2-C7 ring closure. ArmB further catalyzes the trans-esterification of OA to the various sesquiterpene alcohols resulting from the hydroxylation of protoilludene. The melleolides cluster also includes 5 cytochrome P450 monooxygenases, 4 NAD(+)-dependent oxidoreductases, one flavin-dependent oxidoreductase, and one O-methyltransferase. The cytochrome P450 monooxygenases may be involved in protoilludene hydroxylation to elaborate melleolides with multiple alcohol groups, such as melleolide D, which carries alcohol functionalities at C-4, C-5, C-10, and C-13. The role of the NAD(+)-dependent enzymes remains unknown. Numerous melleolides, including arnamial, show 5'-O-methylation of the aromatic moiety which may be catalyzed by the methyltransferase encoded in the cluster. The flavin-dependent oxidoreductase might represent the dehydrogenase yielding the aldehyde in position 1 of arnamial and other melleolides. Finally, several halogenases, localized outside of the cluster, are able to catalyze the transfer of a single chlorine atom to the melleolide backbone, resulting in a 6'-chloromelleolide product. This Armillaria ostoyae (Armillaria root rot fungus) protein is Delta(6)-protoilludene synthase.